The sequence spans 184 residues: NADH-quinone oxidoreductase subunit B (184 aa).

The [4Fe-4S] cluster site is built by C37, C38, C103, and C132.

The protein belongs to the complex I 20 kDa subunit family. In terms of assembly, NDH-1 is composed of 14 different subunits. Subunits NuoB, C, D, E, F, and G constitute the peripheral sector of the complex. [4Fe-4S] cluster serves as cofactor.

It localises to the cell membrane. The catalysed reaction is a quinone + NADH + 5 H(+)(in) = a quinol + NAD(+) + 4 H(+)(out). NDH-1 shuttles electrons from NADH, via FMN and iron-sulfur (Fe-S) centers, to quinones in the respiratory chain. The immediate electron acceptor for the enzyme in this species is believed to be a menaquinone. Couples the redox reaction to proton translocation (for every two electrons transferred, four hydrogen ions are translocated across the cytoplasmic membrane), and thus conserves the redox energy in a proton gradient. The chain is NADH-quinone oxidoreductase subunit B from Nocardioides sp. (strain ATCC BAA-499 / JS614).